We begin with the raw amino-acid sequence, 226 residues long: 7-cyano-7-deazaguanine synthase (226 aa).

10–20 contacts ATP; sequence LSGGLDSATAA. 4 residues coordinate Zn(2+): Cys191, Cys199, Cys202, and Cys205.

Belongs to the QueC family. Zn(2+) serves as cofactor.

It catalyses the reaction 7-carboxy-7-deazaguanine + NH4(+) + ATP = 7-cyano-7-deazaguanine + ADP + phosphate + H2O + H(+). The protein operates within purine metabolism; 7-cyano-7-deazaguanine biosynthesis. Catalyzes the ATP-dependent conversion of 7-carboxy-7-deazaguanine (CDG) to 7-cyano-7-deazaguanine (preQ(0)). This chain is 7-cyano-7-deazaguanine synthase, found in Synechococcus sp. (strain CC9902).